The sequence spans 364 residues: UDP-N-acetylglucosamine--N-acetylmuramyl-(pentapeptide) pyrophosphoryl-undecaprenol N-acetylglucosamine transferase (364 aa).

UDP-N-acetyl-alpha-D-glucosamine contacts are provided by residues 10–12, N124, S195, I250, and Q295; that span reads TGG.

Belongs to the glycosyltransferase 28 family. MurG subfamily.

It is found in the cell membrane. It carries out the reaction Mur2Ac(oyl-L-Ala-gamma-D-Glu-L-Lys-D-Ala-D-Ala)-di-trans,octa-cis-undecaprenyl diphosphate + UDP-N-acetyl-alpha-D-glucosamine = beta-D-GlcNAc-(1-&gt;4)-Mur2Ac(oyl-L-Ala-gamma-D-Glu-L-Lys-D-Ala-D-Ala)-di-trans,octa-cis-undecaprenyl diphosphate + UDP + H(+). Its pathway is cell wall biogenesis; peptidoglycan biosynthesis. Cell wall formation. Catalyzes the transfer of a GlcNAc subunit on undecaprenyl-pyrophosphoryl-MurNAc-pentapeptide (lipid intermediate I) to form undecaprenyl-pyrophosphoryl-MurNAc-(pentapeptide)GlcNAc (lipid intermediate II). In Levilactobacillus brevis (strain ATCC 367 / BCRC 12310 / CIP 105137 / JCM 1170 / LMG 11437 / NCIMB 947 / NCTC 947) (Lactobacillus brevis), this protein is UDP-N-acetylglucosamine--N-acetylmuramyl-(pentapeptide) pyrophosphoryl-undecaprenol N-acetylglucosamine transferase.